The primary structure comprises 401 residues: Exodeoxyribonuclease 7 large subunit (401 aa).

The protein belongs to the XseA family. As to quaternary structure, heterooligomer composed of large and small subunits.

Its subcellular location is the cytoplasm. The catalysed reaction is Exonucleolytic cleavage in either 5'- to 3'- or 3'- to 5'-direction to yield nucleoside 5'-phosphates.. In terms of biological role, bidirectionally degrades single-stranded DNA into large acid-insoluble oligonucleotides, which are then degraded further into small acid-soluble oligonucleotides. The sequence is that of Exodeoxyribonuclease 7 large subunit from Clostridioides difficile (strain 630) (Peptoclostridium difficile).